Here is an 839-residue protein sequence, read N- to C-terminus: MAKAAKAAGSSARFRQRKISVKQTLAVLKQSDIPDLEEEQQRELQQIETGVEKGEEEEHHLQAAINSSIAQSTGAKVEKIYIPTPDASQVWKEYDRFYSSSFHEPASYIRTSVTVEETSGCLYNMDDEDAEFLKTCKPPISEDDFEEVMHRFEVTISEKQPFVSIDVSNLLSFEEMAQHIEDGIRQVQEDPTSPEYILAQLQSSLGITVNGTKGKNEGKAFLATFKKIGAVIYPHWRARKVERKGQSIVPHLKFEDHEKDDSDPYVCFRRRELRQVRKTRRTDVLSIERLRRMQAEMETAKQLVEMVATREFTRKAALKAEWDVFEDRCAIKTLKRELGIKGEDEDLVAQKKRKVEPKKEEKAEKASTPVRGGKAAGSAASAQAAAAQAAAAGSGSPSVSSTHVPPNVSIPPSKIPNMDLITIAQVVRDKDEAIAKAVREKLRLRADADRDWHNLTNSGYIPYCEYLNAEVSSSGEPPVPQYSSINEMAYFEKHNASHRYTTKSDFNKDLASMVGNKPFADAQVYGAIVGDDGELRLSDATSTSSPVDRVIPRSSFMSMRKRVGRGGRMWMDRRGLQRNTVLKPSSLAKNSLDDTAESEADEVAMERLADRQKYDRETEPTRQMSSYDKDPSQLNGISSDTQSIRFGSMLLSKAYENYREVFQQRQQQLMMLQQQILQQQQQQQMRNRQQSHPPGDPGAGLGGGQGAGGGAGGSRNNSPAPGTNGPQSKMHNAAPMGYNKQGMTPSQHQQYQQMQQQQQQQQQQQQQRKMGVAPMNAASAAAAMAAQPRRSSGSPDGQRFNGLPNGGAMANGVLPNGMSQRMMPGGDMKQKSELAKVDA.

Disordered regions lie at residues 350-379, 393-415, 608-640, and 679-839; these read QKKR…AGSA, GSGS…PSKI, LADR…ISSD, and QQQQ…KVDA. Residues 608-620 show a composition bias toward basic and acidic residues; the sequence is LADRQKYDRETEP. Residues 621–640 are compositionally biased toward polar residues; sequence TRQMSSYDKDPSQLNGISSD. Positions 679 to 690 are enriched in low complexity; sequence QQQQQQMRNRQQ. The span at 697 to 713 shows a compositional bias: gly residues; it reads PGAGLGGGQGAGGGAGG. The segment covering 714 to 730 has biased composition (polar residues); that stretch reads SRNNSPAPGTNGPQSKM. The span at 747-786 shows a compositional bias: low complexity; the sequence is QHQQYQQMQQQQQQQQQQQQQRKMGVAPMNAASAAAAMAA. The segment covering 828–839 has biased composition (basic and acidic residues); it reads MKQKSELAKVDA.

It belongs to the enhancer of polycomb family. As to quaternary structure, component of the NuA4 histone acetyltransferase complex.

It localises to the nucleus. Component of the NuA4 histone acetyltransferase complex which is involved in transcriptional activation of selected genes principally by acetylation of nucleosomal histone H4 and H2A. The NuA4 complex is also involved in DNA repair. Involved in gene silencing by neighboring heterochromatin, blockage of the silencing spreading along the chromosome, and required for cell cycle progression through G2/M. This is Enhancer of polycomb-like protein 1 (EPL1) from Yarrowia lipolytica (strain CLIB 122 / E 150) (Yeast).